The following is an 846-amino-acid chain: Putative transcriptional regulator tpeD (846 aa).

A BED-type; degenerate zinc finger spans residues 104–166 (KHQSECWQHF…NCRKSVPVSK (63 aa)). The segment at 734-846 (RAREERDAQQ…RDEDFVYETP (113 aa)) is disordered. The span at 756–769 (PISDSEEAESEDES) shows a compositional bias: acidic residues. Residues 773–786 (PQSPQASQARSQRS) show a composition bias toward low complexity. Residues 797–809 (PLIELDGNEEDEV) show a composition bias toward acidic residues.

It localises to the nucleus. Putative transcriptional regulator; part of the gene cluster that mediates the biosynthesis of polyesters containing 2,4-dihydroxy-6-(2-hydroxypropyl)benzoate and 3-hydroxybutyrate moieties, such as talapolyester G, 15G256beta and 15G256beta-2; as well as to oxidized derivatives such as 15G256alpha. The polypeptide is Putative transcriptional regulator tpeD (Talaromyces stipitatus (strain ATCC 10500 / CBS 375.48 / QM 6759 / NRRL 1006) (Penicillium stipitatum)).